Here is a 209-residue protein sequence, read N- to C-terminus: Large ribosomal subunit protein uL3 (209 aa).

Over residues 112–122 (GTTRGHGTQGN) the composition is skewed to polar residues. The disordered stretch occupies residues 112–146 (GTTRGHGTQGNIKRWGQSRGPETHGSRYHRIPGSM).

The protein belongs to the universal ribosomal protein uL3 family. Part of the 50S ribosomal subunit. Forms a cluster with proteins L14 and L19.

In terms of biological role, one of the primary rRNA binding proteins, it binds directly near the 3'-end of the 23S rRNA, where it nucleates assembly of the 50S subunit. In Lactobacillus johnsonii (strain CNCM I-12250 / La1 / NCC 533), this protein is Large ribosomal subunit protein uL3.